The chain runs to 449 residues: Hyaluronidase-2 (449 aa).

A signal peptide spans 1–23 (MYHLWIKCLAAWIFLKRCNGVHA). 2 disulfides stabilise this stretch: cysteine 47-cysteine 340 and cysteine 211-cysteine 227. N-linked (GlcNAc...) asparagine glycans are attached at residues asparagine 67, asparagine 103, and asparagine 111. Residue glutamate 135 is the Proton donor of the active site. Asparagine 153 is a glycosylation site (N-linked (GlcNAc...) asparagine). Asparagine 357 carries N-linked (GlcNAc...) asparagine glycosylation. 3 disulfides stabilise this stretch: cysteine 365–cysteine 376, cysteine 370–cysteine 427, and cysteine 429–cysteine 438. An N-linked (GlcNAc...) asparagine glycan is attached at asparagine 401. The region spanning 427 to 438 (CQCYQGWKGLYC) is the EGF-like domain.

The protein belongs to the glycosyl hydrolase 56 family. In terms of assembly, monomer. In terms of tissue distribution, expressed by the venom gland.

It localises to the secreted. It carries out the reaction Random hydrolysis of (1-&gt;4)-linkages between N-acetyl-beta-D-glucosamine and D-glucuronate residues in hyaluronate.. Functionally, snake venom endo-hyaluronidase that degrades hyaluronan to smaller oligosaccharide fragments. In venom, it is not toxic by itself, but increases the diffusion of other venom proteins by degrading the extracellular matrix. In addition, it displays antiedematogenic activity. The polypeptide is Hyaluronidase-2 (Bitis arietans (African puff adder)).